The sequence spans 755 residues: Periplasmic nitrate reductase (755 aa).

A signal peptide (tat-type signal) is located at residues 1 to 32 (MSTSRRDFLKYFAMSAAVAAASGAGFGSLALA). Residues 38 to 93 (EKWVKGVCRYCGTGCGVLVGVKDGKAVAIQGDPNNHNAGLLCLKGSLLIPVLNSKE) form the 4Fe-4S Mo/W bis-MGD-type domain. Residues cysteine 45, cysteine 48, cysteine 52, and cysteine 79 each coordinate [4Fe-4S] cluster. Residues lysine 81, glutamine 143, asparagine 168, cysteine 172, 208 to 212 (NTSEA), 236 to 238 (DPR), 255 to 257 (GTD), methionine 340, glutamine 344, asparagine 450, 475 to 477 (IEA), and 647 to 656 (SMRVIDHWHT) contribute to the Mo-bis(molybdopterin guanine dinucleotide) site. Substrate is bound by residues 648 to 653 (MRVIDH) and phenylalanine 721. Positions 729 and 746 each coordinate Mo-bis(molybdopterin guanine dinucleotide).

Belongs to the prokaryotic molybdopterin-containing oxidoreductase family. NasA/NapA/NarB subfamily. Monomer. Component of the periplasmic nitrate reductase NapAB complex composed of NapA and NapB. Requires [4Fe-4S] cluster as cofactor. The cofactor is Mo-bis(molybdopterin guanine dinucleotide). In terms of processing, predicted to be exported by the Tat system. The position of the signal peptide cleavage has been experimentally proven.

It is found in the periplasm. The catalysed reaction is 2 Fe(II)-[cytochrome] + nitrate + 2 H(+) = 2 Fe(III)-[cytochrome] + nitrite + H2O. Its activity is regulated as follows. Activated by potassium and sodium ions and inhibited by magnesium and calcium ions. Catalytic subunit of the periplasmic nitrate reductase complex NapAB. Receives electrons from NapB and catalyzes the reduction of nitrate to nitrite. The protein is Periplasmic nitrate reductase of Desulfovibrio desulfuricans (strain ATCC 27774 / DSM 6949 / MB).